We begin with the raw amino-acid sequence, 450 residues long: Phosphoglucosamine mutase (450 aa).

Ser104 (phosphoserine intermediate) is an active-site residue. Mg(2+) contacts are provided by Ser104, Asp243, Asp245, and Asp247. Position 104 is a phosphoserine (Ser104).

The protein belongs to the phosphohexose mutase family. It depends on Mg(2+) as a cofactor. Post-translationally, activated by phosphorylation.

It carries out the reaction alpha-D-glucosamine 1-phosphate = D-glucosamine 6-phosphate. Its function is as follows. Catalyzes the conversion of glucosamine-6-phosphate to glucosamine-1-phosphate. This chain is Phosphoglucosamine mutase, found in Cutibacterium acnes (strain DSM 16379 / KPA171202) (Propionibacterium acnes).